Reading from the N-terminus, the 388-residue chain is 1-deoxy-D-xylulose 5-phosphate reductoisomerase (388 aa).

7 residues coordinate NADPH: T10, G11, T12, I13, R37, Q38, and N122. Residue K123 coordinates 1-deoxy-D-xylulose 5-phosphate. E124 contacts NADPH. D148 is a binding site for Mn(2+). 1-deoxy-D-xylulose 5-phosphate-binding residues include S149, E150, S179, and H202. E150 lines the Mn(2+) pocket. Residue G208 participates in NADPH binding. S215, N220, K221, and E224 together coordinate 1-deoxy-D-xylulose 5-phosphate. Residue E224 coordinates Mn(2+).

Belongs to the DXR family. The cofactor is Mg(2+). Requires Mn(2+) as cofactor.

The enzyme catalyses 2-C-methyl-D-erythritol 4-phosphate + NADP(+) = 1-deoxy-D-xylulose 5-phosphate + NADPH + H(+). The protein operates within isoprenoid biosynthesis; isopentenyl diphosphate biosynthesis via DXP pathway; isopentenyl diphosphate from 1-deoxy-D-xylulose 5-phosphate: step 1/6. Its function is as follows. Catalyzes the NADPH-dependent rearrangement and reduction of 1-deoxy-D-xylulose-5-phosphate (DXP) to 2-C-methyl-D-erythritol 4-phosphate (MEP). In Laribacter hongkongensis (strain HLHK9), this protein is 1-deoxy-D-xylulose 5-phosphate reductoisomerase.